The sequence spans 300 residues: Delta(7)-sterol 5(6)-desaturase erg31 (300 aa).

A run of 3 helical transmembrane segments spans residues Ile-33 to Leu-53, Val-78 to Ala-98, and Tyr-117 to His-137. Positions Pro-123–Asn-248 constitute a Fatty acid hydroxylase domain. The short motif at His-137–His-141 is the Histidine box-1 element. Positions His-150 to His-154 match the Histidine box-2 motif. Residues His-180–Val-200 form a helical membrane-spanning segment. A Histidine box-3 motif is present at residues His-225–His-229.

The protein belongs to the sterol desaturase family. The cofactor is Fe cation.

Its subcellular location is the endoplasmic reticulum membrane. The enzyme catalyses episterol + 2 Fe(II)-[cytochrome b5] + O2 + 2 H(+) = 5-dehydroepisterol + 2 Fe(III)-[cytochrome b5] + 2 H2O. Its pathway is steroid metabolism; ergosterol biosynthesis. Functionally, C-5 sterol desaturase; part of the third module of ergosterol biosynthesis pathway that includes by the late steps of the pathway. Erg31 and erg32 catalyze the introduction of a C-5 double bond in the B ring to produce 5-dehydroepisterol. The third module or late pathway involves the ergosterol synthesis itself through consecutive reactions that mainly occur in the endoplasmic reticulum (ER) membrane. Firstly, the squalene synthase erg9 catalyzes the condensation of 2 farnesyl pyrophosphate moieties to form squalene, which is the precursor of all steroids. Secondly, squalene is converted into lanosterol by the consecutive action of the squalene epoxidase erg1 and the lanosterol synthase erg7. The lanosterol 14-alpha-demethylase erg11/cyp1 catalyzes C14-demethylation of lanosterol to produce 4,4'-dimethyl cholesta-8,14,24-triene-3-beta-ol. In the next steps, a complex process involving various demethylation, reduction and desaturation reactions catalyzed by the C-14 reductase erg24 and the C-4 demethylation complex erg25-erg26-erg27 leads to the production of zymosterol. Erg28 likely functions in the C-4 demethylation complex reaction by tethering erg26 and Erg27 to the endoplasmic reticulum or to facilitate interaction between these proteins. Then, the sterol 24-C-methyltransferase erg6 catalyzes the methyl transfer from S-adenosyl-methionine to the C-24 of zymosterol to form fecosterol. The C-8 sterol isomerase erg2 catalyzes the reaction which results in unsaturation at C-7 in the B ring of sterols and thus converts fecosterol to episterol. The sterol-C5-desaturases erg31 and erg32 then catalyze the introduction of a C-5 double bond in the B ring to produce 5-dehydroepisterol. The C-22 sterol desaturase erg5 further converts 5-dehydroepisterol into ergosta-5,7,22,24(28)-tetraen-3beta-ol by forming the C-22(23) double bond in the sterol side chain. Finally, ergosta-5,7,22,24(28)-tetraen-3beta-ol is substrate of the C-24(28) sterol reductase erg4 to produce ergosterol. In the genus Schizosaccharomyces, a second route exists between lanosterol and fecosterol, via the methylation of lanosterol to eburicol by erg6, followed by C14-demethylation by erg11/cyp1 and C4-demethylation by the demethylation complex erg25-erg26-erg27. The protein is Delta(7)-sterol 5(6)-desaturase erg31 of Schizosaccharomyces pombe (strain 972 / ATCC 24843) (Fission yeast).